Here is a 378-residue protein sequence, read N- to C-terminus: Flap endonuclease 1 (378 aa).

Positions 1-105 (MGIKGLNSII…HELDKRTERR (105 aa)) are N-domain. Residue Asp34 participates in Mg(2+) binding. The DNA site is built by Arg47 and Arg71. Asp87, Glu156, Glu158, Asp177, and Asp179 together coordinate Mg(2+). An I-domain region spans residues 120 to 251 (EIMKHERRLV…VTALKLIKEH (132 aa)). Glu156 contacts DNA. DNA is bound by residues Gly229 and Asp231. Asp231 serves as a coordination point for Mg(2+). Residues 337 to 345 (VQGRLDSFF) are interaction with PCNA. Positions 356–367 (AASARKAQAAKK) are enriched in low complexity. The disordered stretch occupies residues 356 to 378 (AASARKAQAAKKTNQKGKVLKRR). Basic residues predominate over residues 368-378 (TNQKGKVLKRR).

The protein belongs to the XPG/RAD2 endonuclease family. FEN1 subfamily. In terms of assembly, interacts with PCNA. Three molecules of FEN1 bind to one PCNA trimer with each molecule binding to one PCNA monomer. PCNA stimulates the nuclease activity without altering cleavage specificity. Requires Mg(2+) as cofactor. Post-translationally, phosphorylated. Phosphorylation upon DNA damage induces relocalization to the nuclear plasma.

It is found in the nucleus. The protein localises to the nucleolus. Its subcellular location is the nucleoplasm. It localises to the mitochondrion. Structure-specific nuclease with 5'-flap endonuclease and 5'-3' exonuclease activities involved in DNA replication and repair. During DNA replication, cleaves the 5'-overhanging flap structure that is generated by displacement synthesis when DNA polymerase encounters the 5'-end of a downstream Okazaki fragment. It enters the flap from the 5'-end and then tracks to cleave the flap base, leaving a nick for ligation. Also involved in the long patch base excision repair (LP-BER) pathway, by cleaving within the apurinic/apyrimidinic (AP) site-terminated flap. Acts as a genome stabilization factor that prevents flaps from equilibrating into structures that lead to duplications and deletions. Also possesses 5'-3' exonuclease activity on nicked or gapped double-stranded DNA, and exhibits RNase H activity. Also involved in replication and repair of rDNA and in repairing mitochondrial DNA. The sequence is that of Flap endonuclease 1 from Eremothecium gossypii (strain ATCC 10895 / CBS 109.51 / FGSC 9923 / NRRL Y-1056) (Yeast).